The sequence spans 206 residues: Probable GTP-binding protein EngB (206 aa).

The EngB-type G domain maps to 8–195 (RSDEVVLVGR…EDAVNSHFDA (188 aa)). Residues 16-23 (GRSNVGKS), 41-45 (GVTRQ), 60-63 (DLPG), 140-143 (NKMD), and 175-177 (ITA) each bind GTP. The Mg(2+) site is built by Ser23 and Thr43.

The protein belongs to the TRAFAC class TrmE-Era-EngA-EngB-Septin-like GTPase superfamily. EngB GTPase family. Mg(2+) is required as a cofactor.

In terms of biological role, necessary for normal cell division and for the maintenance of normal septation. The chain is Probable GTP-binding protein EngB from Halobacterium salinarum (strain ATCC 29341 / DSM 671 / R1).